A 281-amino-acid chain; its full sequence is Putative integrase/recombinase y4rD (281 aa).

Residues Leu5–Ala98 enclose the Core-binding (CB) domain. Residues Glu122–Val281 form the Tyr recombinase domain. Active-site residues include Arg162, Lys188, His262, and Arg265.

The protein belongs to the 'phage' integrase family.

In terms of biological role, seems to be non-functional. The chain is Putative integrase/recombinase y4rD from Sinorhizobium fredii (strain NBRC 101917 / NGR234).